We begin with the raw amino-acid sequence, 333 residues long: HTH-type transcriptional repressor PurR (333 aa).

Positions 2 to 56 (ATIKDVAKLASVSTTTVSHVINKTRFVAEATQKRVWEAVEELNYAPSAVARSLKC) constitute an HTH lacI-type domain. A DNA-binding region (H-T-H motif) is located at residues 4–23 (IKDVAKLASVSTTTVSHVIN). A DNA-binding region spans residues 48 to 56 (SAVARSLKC). Hypoxanthine contacts are provided by phenylalanine 73, lysine 189, threonine 191, phenylalanine 220, and aspartate 274.

As to quaternary structure, homodimer.

It participates in purine metabolism; purine nucleotide biosynthesis [regulation]. Its function is as follows. Is the main repressor of the genes involved in the de novo synthesis of purine nucleotides, regulating purB, purC, purEK, purF, purHD, purL, purMN and guaBA expression. PurR is allosterically activated to bind its cognate DNA by binding the purine corepressors, hypoxanthine or guanine, thereby effecting transcription repression. The chain is HTH-type transcriptional repressor PurR from Aliivibrio salmonicida (strain LFI1238) (Vibrio salmonicida (strain LFI1238)).